Consider the following 136-residue polypeptide: Ribonuclease P protein component (136 aa).

Belongs to the RnpA family. Consists of a catalytic RNA component (M1 or rnpB) and a protein subunit.

It carries out the reaction Endonucleolytic cleavage of RNA, removing 5'-extranucleotides from tRNA precursor.. RNaseP catalyzes the removal of the 5'-leader sequence from pre-tRNA to produce the mature 5'-terminus. It can also cleave other RNA substrates such as 4.5S RNA. The protein component plays an auxiliary but essential role in vivo by binding to the 5'-leader sequence and broadening the substrate specificity of the ribozyme. The polypeptide is Ribonuclease P protein component (Burkholderia pseudomallei (strain 1106a)).